Reading from the N-terminus, the 253-residue chain is Acidic endochitinase pcht28 (253 aa).

Residues Met1 to Ala24 form the signal peptide. Glu92 serves as the catalytic Proton donor. Cys212 and Cys244 are disulfide-bonded.

It belongs to the glycosyl hydrolase 19 family. Chitinase class II subfamily.

The protein localises to the secreted. Its subcellular location is the extracellular space. The catalysed reaction is Random endo-hydrolysis of N-acetyl-beta-D-glucosaminide (1-&gt;4)-beta-linkages in chitin and chitodextrins.. Its function is as follows. Defense against chitin-containing fungal pathogens. The chain is Acidic endochitinase pcht28 from Solanum chilense (Tomato).